A 584-amino-acid polypeptide reads, in one-letter code: Arginine--tRNA ligase (584 aa).

The short motif at 127–137 is the 'HIGH' region element; that stretch reads PNTNKPLHVGH.

This sequence belongs to the class-I aminoacyl-tRNA synthetase family. In terms of assembly, monomer.

It is found in the cytoplasm. The catalysed reaction is tRNA(Arg) + L-arginine + ATP = L-arginyl-tRNA(Arg) + AMP + diphosphate. The polypeptide is Arginine--tRNA ligase (Borrelia turicatae (strain 91E135)).